A 513-amino-acid polypeptide reads, in one-letter code: Prostaglandin E2 receptor EP4 subtype (513 aa).

The Extracellular portion of the chain corresponds to 1–44; the sequence is MAEVGGTIPRSNRELQRCVLLTTTIMSIPGVNASFSSTPERLNS. Asn-32 carries an N-linked (GlcNAc...) asparagine glycan. A helical transmembrane segment spans residues 45 to 68; it reads PVTIPAVMFIFGVVGNLVAIVVLC. Residues 69–80 are Cytoplasmic-facing; it reads KSRKEQKETTFY. The helical transmembrane segment at 81-104 threads the bilayer; that stretch reads TLVCGLAVTDLLGTLLVSPVTIAT. The Extracellular segment spans residues 105-121; sequence YMKGQWPGDQALCDYST. Residues Cys-117 and Cys-195 are joined by a disulfide bond. A helical transmembrane segment spans residues 122–140; that stretch reads FILLFFGLSGLSIICAMSI. Residues 141–160 are Cytoplasmic-facing; that stretch reads ERYLAINHAYFYSHYVDKRL. Residues 161–185 traverse the membrane as a helical segment; it reads AGLTLFAIYASNVLFCALPNMGLGR. The Extracellular segment spans residues 186 to 209; it reads SERQYPGTWCFIDWTTNVTAYAAF. A helical membrane pass occupies residues 210–236; the sequence is SYMYAGFSSFLILATVLCNVLVCGALL. Topologically, residues 237-295 are cytoplasmic; that stretch reads RMHRQFMRRTSLGTEQHHAAAAAAVASVACRGHAGASPALQRLSDFRRRRSFRRIAGAE. Residues 296 to 323 traverse the membrane as a helical segment; it reads IQMVILLIATSLVVLICSIPLVVRVFIN. The Extracellular segment spans residues 324-340; the sequence is QLYQPNVVKDISRNPDL. Residues 341–360 form a helical membrane-spanning segment; the sequence is QAIRIASVNPILDPWIYILL. Residues 361 to 513 are Cytoplasmic-facing; that stretch reads RKTVLSKAIE…ETLKLSEKCI (153 aa). The tract at residues 383–403 is disordered; it reads GRDSSAQHCSESRRTSSAMSG. Residues 384 to 403 show a composition bias toward polar residues; that stretch reads RDSSAQHCSESRRTSSAMSG. Phosphoserine is present on residues Ser-402, Ser-405, and Ser-407.

It belongs to the G-protein coupled receptor 1 family. In terms of assembly, interacts with FEM1A. Post-translationally, phosphorylation mediates agonist-mediated desensitization by promoting cytoplasmic retention. As to expression, abundant expression in ileum, thymus and mastocytoma P-815 cells. Also observed in lung, spleen, heart and uterus.

Its subcellular location is the cell membrane. Receptor for prostaglandin E2 (PGE2). The activity of this receptor is mediated by G(s) proteins that stimulate adenylate cyclase. Has a relaxing effect on smooth muscle. May play an important role in regulating renal hemodynamics, intestinal epithelial transport, adrenal aldosterone secretion, and uterine function. The chain is Prostaglandin E2 receptor EP4 subtype (Ptger4) from Mus musculus (Mouse).